Reading from the N-terminus, the 106-residue chain is Phosphoribosyl-ATP pyrophosphatase (106 aa).

The protein belongs to the PRA-PH family.

It localises to the cytoplasm. The catalysed reaction is 1-(5-phospho-beta-D-ribosyl)-ATP + H2O = 1-(5-phospho-beta-D-ribosyl)-5'-AMP + diphosphate + H(+). The protein operates within amino-acid biosynthesis; L-histidine biosynthesis; L-histidine from 5-phospho-alpha-D-ribose 1-diphosphate: step 2/9. The chain is Phosphoribosyl-ATP pyrophosphatase from Rhizorhabdus wittichii (strain DSM 6014 / CCUG 31198 / JCM 15750 / NBRC 105917 / EY 4224 / RW1) (Sphingomonas wittichii).